We begin with the raw amino-acid sequence, 297 residues long: Non-structural protein VP10 (297 aa).

The sequence is that of Non-structural protein VP10 from Oryza latifolia (Indian wild rice).